We begin with the raw amino-acid sequence, 317 residues long: Melanocyte-stimulating hormone receptor (317 aa).

Over 1 to 37 (MPALGSPRRLLGSLNCTPPATLPLTLAPNRTGPQCLE) the chain is Extracellular. Asparagine 29 carries N-linked (GlcNAc...) asparagine glycosylation. The helical transmembrane segment at 38–63 (VSIPDGLFLSLGLVSLVENVLVVAAI) threads the bilayer. Topologically, residues 64–72 (AKNRNLHSP) are cytoplasmic. The helical transmembrane segment at 73-93 (MYYFICCLAMSDLLVSVSNVL) threads the bilayer. Over 94–118 (ETAVMLLLEAGVLATRAAVVQQLDN) the chain is Extracellular. The helical transmembrane segment at 119-140 (VIDVLICSSMVSSLCFLGAIAV) threads the bilayer. Residues 141–163 (DRYISIFYALRYHSVVTLPRAWR) lie on the Cytoplasmic side of the membrane. The helical transmembrane segment at 164–183 (IIAAIWVASILTSVLSITYY) threads the bilayer. The Extracellular portion of the chain corresponds to 184–191 (NHTVVLLC). A helical membrane pass occupies residues 192–211 (LVGFFIAMLALMAVLYVHML). Residues 212-240 (ARACQHARGIARLQKRQRPIHQGFGLKGA) are Cytoplasmic-facing. Residues 241–266 (ATLTILLGVFFLCWGPFFLHLSLIVL) form a helical membrane-spanning segment. At 267 to 279 (CPQHPTCGCIFKN) the chain is on the extracellular side. A helical membrane pass occupies residues 280–300 (FNLFLALIICNAIVDPLIYAF). Over 301 to 317 (RSQELRKTLQEVLQCSW) the chain is Cytoplasmic. A lipid anchor (S-palmitoyl cysteine) is attached at cysteine 315.

It belongs to the G-protein coupled receptor 1 family. As to quaternary structure, interacts with MGRN1, but does not undergo MGRN1-mediated ubiquitination; this interaction competes with GNAS-binding and thus inhibits agonist-induced cAMP production. Interacts with OPN3; the interaction results in a decrease in MC1R-mediated cAMP signaling and ultimately a decrease in melanin production in melanocytes.

The protein resides in the cell membrane. Functionally, receptor for MSH (alpha, beta and gamma) and ACTH. The activity of this receptor is mediated by G proteins which activate adenylate cyclase. Mediates melanogenesis, the production of eumelanin (black/brown) and phaeomelanin (red/yellow), via regulation of cAMP signaling in melanocytes. This Capra hircus (Goat) protein is Melanocyte-stimulating hormone receptor (MC1R).